Reading from the N-terminus, the 134-residue chain is ATP synthase epsilon chain, chloroplastic (134 aa).

This sequence belongs to the ATPase epsilon chain family. In terms of assembly, F-type ATPases have 2 components, CF(1) - the catalytic core - and CF(0) - the membrane proton channel. CF(1) has five subunits: alpha(3), beta(3), gamma(1), delta(1), epsilon(1). CF(0) has three main subunits: a, b and c.

The protein localises to the plastid. It localises to the chloroplast thylakoid membrane. In terms of biological role, produces ATP from ADP in the presence of a proton gradient across the membrane. The protein is ATP synthase epsilon chain, chloroplastic of Spinacia oleracea (Spinach).